Here is a 274-residue protein sequence, read N- to C-terminus: MSDCLLPSSDMDAFRKILKKANSVVILTGAGVSAESGVPTFRGAGGLWRTYSAQNLATPSAFRSNPSLVWEFYHHRRENMASKSPNNAHNAIAEFEHRMTKEGRHVSVITQNIDELHQRAGSVNVLELHGSLFKTRCLKCKKIEPNHDSPICEALRGKGSPSPNEVGELVPESLLPRCKVSSCGGLLRPHVVWFHENLDSAVLKKADEELNSCDLCLVVGTSSVVYPAAMFAPQVAERGVPVAEFNMETTAATHHFGFHFSGPCGELLPKALAP.

The Deacetylase sirtuin-type domain occupies 4–274; sequence CLLPSSDMDA…GELLPKALAP (271 aa). Position 29 to 48 (29 to 48) interacts with NAD(+); it reads GAGVSAESGVPTFRGAGGLW. The substrate site is built by tyrosine 73 and arginine 76. 111–114 lines the NAD(+) pocket; the sequence is QNID. The Proton acceptor role is filled by histidine 129. Zn(2+)-binding residues include cysteine 137, cysteine 140, cysteine 178, and cysteine 183. Residues 220 to 222, 246 to 248, and cysteine 264 each bind NAD(+); these read GTS and NME.

This sequence belongs to the sirtuin family. Class III subfamily. Zn(2+) serves as cofactor.

The protein resides in the mitochondrion. The enzyme catalyses N(6)-malonyl-L-lysyl-[protein] + NAD(+) + H2O = 2''-O-malonyl-ADP-D-ribose + nicotinamide + L-lysyl-[protein]. It carries out the reaction N(6)-succinyl-L-lysyl-[protein] + NAD(+) + H2O = 2''-O-succinyl-ADP-D-ribose + nicotinamide + L-lysyl-[protein]. The catalysed reaction is N(6)-glutaryl-L-lysyl-[protein] + NAD(+) + H2O = 2''-O-glutaryl-ADP-D-ribose + nicotinamide + L-lysyl-[protein]. Functionally, NAD-dependent lysine demalonylase, desuccinylase and deglutarylase that specifically removes malonyl, succinyl and glutaryl groups on target proteins. Has weak NAD-dependent protein deacetylase activity; however this activity may not be physiologically relevant in vivo. The chain is NAD-dependent protein deacylase from Daphnia pulex (Water flea).